The following is a 333-amino-acid chain: Serine racemase (333 aa).

Position 13 (E13) interacts with Mg(2+). ATP contacts are provided by S31, S32, I33, K51, and T52. The active-site Proton acceptor is the K56. The residue at position 56 (K56) is an N6-(pyridoxal phosphate)lysine. Residue P69 participates in Ca(2+) binding. T71 is subject to Phosphothreonine. T81 serves as a coordination point for Ca(2+). Catalysis depends on S84, which acts as the Proton acceptor. N86 is a binding site for pyridoxal 5'-phosphate. Residue Q89 coordinates ATP. C113 carries the post-translational modification S-nitrosocysteine. An ATP-binding site is contributed by Y121. Residue N154 coordinates pyridoxal 5'-phosphate. Residue D178 coordinates Mg(2+). 5 residues coordinate pyridoxal 5'-phosphate: G185, G186, G187, G188, and M189. Mg(2+)-binding residues include E210, A214, D216, and N247. Ca(2+) contacts are provided by E210, A214, D216, and N247. Positions 210, 214, and 216 each coordinate Mn(2+). K279 serves as a coordination point for ATP. S313 provides a ligand contact to pyridoxal 5'-phosphate. N316 serves as a coordination point for ATP.

Belongs to the serine/threonine dehydratase family. As to quaternary structure, homodimer. The cofactor is Mg(2+). It depends on Mn(2+) as a cofactor. Ca(2+) serves as cofactor. Requires pyridoxal 5'-phosphate as cofactor. Post-translationally, S-nitrosylated, leading to decrease the enzyme activity. Expressed in the cerebellum and frontal cortex (at protein level).

It carries out the reaction L-serine = D-serine. It catalyses the reaction D-serine = pyruvate + NH4(+). The catalysed reaction is L-serine = pyruvate + NH4(+). Allosterically activated by magnesium, and possibly also other divalent metal cations. Allosterically activated by ATP, ADP or GTP. Competitively inhibited by malonate. In terms of biological role, catalyzes the synthesis of D-serine from L-serine. D-serine is a key coagonist with glutamate at NMDA receptors. Has dehydratase activity towards both L-serine and D-serine. The protein is Serine racemase (Srr) of Rattus norvegicus (Rat).